The following is a 294-amino-acid chain: Peroxidase-like protein 3 (294 aa).

N-linked (GlcNAc...) asparagine glycosylation occurs at asparagine 129.

Belongs to the peroxidase family. Component of the acid-insoluble and acid-soluble organic matrix of calcified layers of the shell (at protein level).

It is found in the secreted. The protein is Peroxidase-like protein 3 of Lottia gigantea (Giant owl limpet).